The sequence spans 714 residues: Elongation factor G-like protein (714 aa).

A tr-type G domain is found at 21–289; the sequence is GGVRNVVLVG…VATRGFPSPM (269 aa). The G1 stretch occupies residues 30 to 37; it reads GPSGGGKT. 30–37 is a GTP binding site; the sequence is GPSGGGKT. The segment at 73–77 is G2; that stretch reads QRSVG. The tract at residues 94-97 is G3; sequence DTPG. Residues 94–98 and 148–151 contribute to the GTP site; these read DTPGY and TKLD. Residues 148 to 151 are G4; that stretch reads TKLD. The segment at 267–269 is G5; it reads CSS.

The protein belongs to the TRAFAC class translation factor GTPase superfamily. Classic translation factor GTPase family. EF-G/EF-2 subfamily.

This chain is Elongation factor G-like protein, found in Mycobacterium tuberculosis (strain ATCC 25618 / H37Rv).